The sequence spans 230 residues: tRNA (guanine-N(7)-)-methyltransferase (230 aa).

S-adenosyl-L-methionine contacts are provided by glutamate 61, glutamate 86, asparagine 113, and aspartate 136. Aspartate 136 is a catalytic residue. Substrate is bound by residues lysine 140, aspartate 172, and 208–211 (TKYE).

Belongs to the class I-like SAM-binding methyltransferase superfamily. TrmB family.

It carries out the reaction guanosine(46) in tRNA + S-adenosyl-L-methionine = N(7)-methylguanosine(46) in tRNA + S-adenosyl-L-homocysteine. Its pathway is tRNA modification; N(7)-methylguanine-tRNA biosynthesis. Functionally, catalyzes the formation of N(7)-methylguanine at position 46 (m7G46) in tRNA. This Mycobacterium leprae (strain Br4923) protein is tRNA (guanine-N(7)-)-methyltransferase.